The following is a 176-amino-acid chain: Large ribosomal subunit protein uL6 (176 aa).

It belongs to the universal ribosomal protein uL6 family. As to quaternary structure, part of the 50S ribosomal subunit.

Functionally, this protein binds to the 23S rRNA, and is important in its secondary structure. It is located near the subunit interface in the base of the L7/L12 stalk, and near the tRNA binding site of the peptidyltransferase center. The polypeptide is Large ribosomal subunit protein uL6 (Burkholderia cenocepacia (strain HI2424)).